We begin with the raw amino-acid sequence, 86 residues long: Large ribosomal subunit protein bL31B (86 aa).

It belongs to the bacterial ribosomal protein bL31 family. Type B subfamily. As to quaternary structure, part of the 50S ribosomal subunit.

This chain is Large ribosomal subunit protein bL31B, found in Cupriavidus necator (strain ATCC 17699 / DSM 428 / KCTC 22496 / NCIMB 10442 / H16 / Stanier 337) (Ralstonia eutropha).